A 193-amino-acid polypeptide reads, in one-letter code: dCTP deaminase (193 aa).

Residues 110-115, aspartate 128, 136-138, tyrosine 171, lysine 178, and glutamine 182 each bind dCTP; these read RSSLAR and VLE. The Proton donor/acceptor role is filled by glutamate 138.

It belongs to the dCTP deaminase family. In terms of assembly, homotrimer.

The catalysed reaction is dCTP + H2O + H(+) = dUTP + NH4(+). Its pathway is pyrimidine metabolism; dUMP biosynthesis; dUMP from dCTP (dUTP route): step 1/2. Functionally, catalyzes the deamination of dCTP to dUTP. This Buchnera aphidicola subsp. Baizongia pistaciae (strain Bp) protein is dCTP deaminase.